The following is an 88-amino-acid chain: MGTARFLRAVLLLSVLLMVTFPALLSAEHHDGRVDICRLPSDSGDCLRFFEMWCFDGTTCTKFVYGGYGGNDNRFPTEKACMKRCAKA.

Residues 1 to 27 (MGTARFLRAVLLLSVLLMVTFPALLSA) form the signal peptide. The propeptide occupies 28–33 (EHHDGR). Positions 37-85 (CRLPSDSGDCLRFFEMWCFDGTTCTKFVYGGYGGNDNRFPTEKACMKRC) constitute a BPTI/Kunitz inhibitor domain. Disulfide bonds link Cys37–Cys85 and Cys60–Cys81.

Belongs to the venom Kunitz-type family. 03 (sub-Kunitz) subfamily. As to expression, expressed by the venom gland.

The protein localises to the secreted. In terms of biological role, serine protease inhibitor that inhibits trypsin at a molar ratio of 1:1. The polypeptide is Kunitz-type U15-theraphotoxin-Hhn1k (Cyriopagopus hainanus (Chinese bird spider)).